The following is a 1179-amino-acid chain: Serine/threonine-protein kinase pakG (1179 aa).

Residues 12–53 adopt a coiled-coil conformation; sequence SKTNEDIELIKQKLKEDRELLEKERAQFEEERKIIFESLNKV. A CRIB domain is found at 111 to 124; the sequence is IGTPFNVQHKVHVD. Residues 139-390 enclose the Protein kinase domain; the sequence is FLIDCILGTG…AIELLTHPFL (252 aa). ATP contacts are provided by residues 145-153 and Lys-168; that span reads LGTGSYGTV. Residue Asp-257 is the Proton acceptor of the active site. 4 disordered regions span residues 414 to 469, 589 to 631, 705 to 1086, and 1121 to 1179; these read KKKK…SSLD, IGNS…NNNN, SSSS…PITL, and TEIN…SPKK. Residues 621–668 are a coiled coil; the sequence is NNNNNNNNNNNEFLINQIKKELILDFNENMKQYINQQLTNLKEEMLKE. 2 stretches are compositionally biased toward low complexity: residues 705–723 and 743–761; these read SSSS…SNSS and LPPS…TSSP. Pro residues predominate over residues 762-776; it reads SPSPSPSPSPSPSSP. 2 stretches are compositionally biased toward low complexity: residues 777 to 788 and 812 to 833; these read LPSSSTSTVNTP and NNNN…NNNN. The span at 834-857 shows a compositional bias: polar residues; sequence VIQSPKLNNRPLSPTTPTKQFNNR. The span at 864–891 shows a compositional bias: low complexity; that stretch reads FNNRPPSPSKFNNRPPSPSNRPLSPKNS. A compositionally biased stretch (polar residues) spans 892–946; that stretch reads YNSLEKSNNGSISNNRPLSPKNSLEKSTTQNNTSSEDISTTTVTVTSEQGGTPIT. The segment covering 954–963 has biased composition (pro residues); the sequence is RPKPSPPPIP. 3 stretches are compositionally biased toward low complexity: residues 964–997, 1024–1046, and 1053–1077; these read MNKS…TIAA, TTIT…SPNS, and ITTS…SSSN. Positions 1121–1135 are enriched in polar residues; sequence TEINLPSSSPSTPQK. Low complexity predominate over residues 1137-1158; it reads NTPSSIPTTPTTPTTNGGSVSS.

Belongs to the protein kinase superfamily. STE Ser/Thr protein kinase family. STE20 subfamily. Mg(2+) serves as cofactor.

The catalysed reaction is L-seryl-[protein] + ATP = O-phospho-L-seryl-[protein] + ADP + H(+). The enzyme catalyses L-threonyl-[protein] + ATP = O-phospho-L-threonyl-[protein] + ADP + H(+). The protein is Serine/threonine-protein kinase pakG of Dictyostelium discoideum (Social amoeba).